Here is a 159-residue protein sequence, read N- to C-terminus: Cytochrome c-type biogenesis protein CcmE (159 aa).

The Cytoplasmic portion of the chain corresponds to methionine 1–arginine 8. Residues leucine 9–alanine 29 form a helical; Signal-anchor for type II membrane protein membrane-spanning segment. Over leucine 30–proline 159 the chain is Periplasmic. The heme site is built by histidine 130 and tyrosine 134. The interval histidine 130–proline 159 is disordered.

The protein belongs to the CcmE/CycJ family.

The protein resides in the cell inner membrane. In terms of biological role, heme chaperone required for the biogenesis of c-type cytochromes. Transiently binds heme delivered by CcmC and transfers the heme to apo-cytochromes in a process facilitated by CcmF and CcmH. This Cronobacter sakazakii (strain ATCC BAA-894) (Enterobacter sakazakii) protein is Cytochrome c-type biogenesis protein CcmE.